The primary structure comprises 65 residues: MDYRLLEIVACPVCKGKLNYDKDKQELICKIDRLAYPIKDGIPVMLEPEARRMTMEEVESCRSQS.

Belongs to the UPF0434 family.

The polypeptide is UPF0434 protein VFMJ11_A0475 (Aliivibrio fischeri (strain MJ11) (Vibrio fischeri)).